Reading from the N-terminus, the 106-residue chain is uncharacterized protein (106 aa).

4 helical membrane-spanning segments follow: residues 3–23 (WFLL…MKYI), 29–49 (KWPI…LSQA), 50–70 (MIVL…SIGV), and 82–102 (FQLS…GLRL).

This sequence belongs to the drug/metabolite transporter (DMT) superfamily. Small multidrug resistance (SMR) (TC 2.A.7.1) family.

Its subcellular location is the cell membrane. This is an uncharacterized protein from Bacillus subtilis (strain 168).